The primary structure comprises 281 residues: Pantothenate synthetase (281 aa).

30–37 (MGNLHLGH) contributes to the ATP binding site. The Proton donor role is filled by His37. Gln61 contacts (R)-pantoate. Residue Gln61 coordinates beta-alanine. ATP is bound at residue 149 to 152 (GRKD). Gln155 provides a ligand contact to (R)-pantoate. ATP is bound by residues Ile178 and 186–189 (MSSR).

Belongs to the pantothenate synthetase family. Homodimer.

It is found in the cytoplasm. The catalysed reaction is (R)-pantoate + beta-alanine + ATP = (R)-pantothenate + AMP + diphosphate + H(+). The protein operates within cofactor biosynthesis; (R)-pantothenate biosynthesis; (R)-pantothenate from (R)-pantoate and beta-alanine: step 1/1. In terms of biological role, catalyzes the condensation of pantoate with beta-alanine in an ATP-dependent reaction via a pantoyl-adenylate intermediate. This is Pantothenate synthetase from Shewanella woodyi (strain ATCC 51908 / MS32).